Consider the following 322-residue polypeptide: MSARDGNTASEWVPTGSVTVRVPGKVNLYLDVGDRRDDGYHELTTVFHAVSLLDEVTVRTADILSLEMTGEGAESLPTDERNLAWRAAELMADHVGRSPDVAISIEKTIPVAGGMAGGSADAAAVLVAMNSLWELGVPRRDLHALAAQLGSDVPFALHGGTALGTGRGEELATVLTRNTFHWVLAFSPGGLSTAKVFAEIDRLRAEEDRTLPPRLESPEPVLAALASGDPAQLAPLLGNDLQPAALSLDSTLRRTLRAGVDAGALAGVVSGSGPTCAFLCGSAGAAVDVGTELAGAGVCRTVRVASGPVQGARVVPSPSNAG.

K25 is an active-site residue. 110-120 contacts ATP; the sequence is PVAGGMAGGSA. The active site involves D152.

It belongs to the GHMP kinase family. IspE subfamily.

The catalysed reaction is 4-CDP-2-C-methyl-D-erythritol + ATP = 4-CDP-2-C-methyl-D-erythritol 2-phosphate + ADP + H(+). It participates in isoprenoid biosynthesis; isopentenyl diphosphate biosynthesis via DXP pathway; isopentenyl diphosphate from 1-deoxy-D-xylulose 5-phosphate: step 3/6. In terms of biological role, catalyzes the phosphorylation of the position 2 hydroxy group of 4-diphosphocytidyl-2C-methyl-D-erythritol. This chain is 4-diphosphocytidyl-2-C-methyl-D-erythritol kinase, found in Mycolicibacterium vanbaalenii (strain DSM 7251 / JCM 13017 / BCRC 16820 / KCTC 9966 / NRRL B-24157 / PYR-1) (Mycobacterium vanbaalenii).